The chain runs to 71 residues: Protein CYSTEINE-RICH TRANSMEMBRANE MODULE 3 (71 aa).

The disordered stretch occupies residues 30–49 (VMMKDSPQTVQPPHEGQSKG). Residues 48–64 (KGSGGFLRGCLAAMCCC) form a helical membrane-spanning segment.

This sequence belongs to the CYSTM1 family. In terms of assembly, heterodimers. Interacts with CYSTM7 and WIH1/CYSTM13. In terms of tissue distribution, mostly expressed in leaves and flowers and, to a lower extent, in stems, siliques, shoots and roots.

It is found in the cell membrane. Its subcellular location is the cytoplasm. The protein resides in the mitochondrion. Negatively regulates salt stress responses and Na(+) homeostasis. Prevents Na(+) efflux, disturbs reactive oxygen species (ROS) homeostasis, and represses the expression of nuclear salt stress-responsive genes. Involved in resistance to abiotic stress. The polypeptide is Protein CYSTEINE-RICH TRANSMEMBRANE MODULE 3 (Arabidopsis thaliana (Mouse-ear cress)).